We begin with the raw amino-acid sequence, 528 residues long: Capsid scaffolding protein (528 aa).

Residues His-46, Ser-116, and His-135 each act as charge relay system in the active site. Positions 270-288 (HGNYDAVESATATTAMSNQ) are interaction with pAP. The disordered stretch occupies residues 394-432 (KKRHFQSDSEDELSFPGDPEYTKKRRRHKVDNDDDKEMA). Residues 416–422 (KKRRRHK) carry the Nuclear localization signal motif. Positions 508 to 528 (SMDLLKLNKKLFVDALNKMDS) are interaction with major capsid protein.

Belongs to the herpesviridae capsid scaffolding protein family. As to quaternary structure, homomultimer. Interacts with major capsid protein. In terms of assembly, exists in a monomer-dimer equilibrium with the dimer being the active species. Capsid scaffolding protein is cleaved by assemblin after formation of the spherical procapsid. As a result, the capsid obtains its mature, icosahedral shape. Cleavages occur at two or more sites: release (R-site) and maturation (M-site).

It localises to the host cytoplasm. It is found in the host nucleus. It catalyses the reaction Cleaves -Ala-|-Ser- and -Ala-|-Ala- bonds in the scaffold protein.. In terms of biological role, acts as a scaffold protein by binding major capsid protein in the cytoplasm, inducing the nuclear localization of both proteins. Multimerizes in the nucleus such as major capsid protein forms the icosahedral T=16 capsid. Autocatalytic cleavage releases the assembly protein, and subsequently abolishes interaction with major capsid protein. Cleavages products are evicted from the capsid before or during DNA packaging. Functionally, protease that plays an essential role in virion assembly within the nucleus. Catalyzes the cleavage of the assembly protein after formation of the spherical procapsid. By that cleavage, the capsid matures and gains its icosahedral shape. The cleavage sites seem to include -Ala-Ser-, -Ala-Ala-, as well as Ala-Thr bonds. Assemblin and cleavages products are evicted from the capsid before or during DNA packaging. Plays a major role in capsid assembly. Acts as a scaffold protein by binding major capsid protein. Multimerizes in the nucleus such as major capsid protein forms the icosahedral T=16 capsid. Cleaved by assemblin after capsid completion. The cleavages products are evicted from the capsid before or during DNA packaging. This chain is Capsid scaffolding protein (U53), found in Homo sapiens (Human).